Consider the following 241-residue polypeptide: Homeobox protein TGIF2LX (241 aa).

Disordered regions lie at residues 1-58 (MEAA…GNLP) and 126-210 (TGKD…SPEE). The segment covering 21–39 (AKTQSPAQDTSIMSRNNAD) has biased composition (polar residues). Residues 48-111 (EHKKKRKGNL…INARRRILPD (64 aa)) constitute a DNA-binding region (homeobox; TALE-type). Residues 195-206 (VSVTSPSSPELV) show a composition bias toward low complexity.

It belongs to the TALE/TGIF homeobox family. Specifically expressed in adult testis.

It is found in the nucleus. May have a transcription role in testis. This is Homeobox protein TGIF2LX (TGIF2LX) from Homo sapiens (Human).